The chain runs to 425 residues: Dihydroorotase (425 aa).

Zn(2+) is bound by residues histidine 58 and histidine 60. Residues 60-62 (HFR) and asparagine 92 contribute to the substrate site. Zn(2+) is bound by residues aspartate 150, histidine 177, and histidine 230. Asparagine 276 serves as a coordination point for substrate. Aspartate 303 is a Zn(2+) binding site. Aspartate 303 is a catalytic residue. Residues histidine 307 and 321–322 (FG) each bind substrate.

It belongs to the metallo-dependent hydrolases superfamily. DHOase family. Class I DHOase subfamily. Zn(2+) is required as a cofactor.

The enzyme catalyses (S)-dihydroorotate + H2O = N-carbamoyl-L-aspartate + H(+). It functions in the pathway pyrimidine metabolism; UMP biosynthesis via de novo pathway; (S)-dihydroorotate from bicarbonate: step 3/3. Functionally, catalyzes the reversible cyclization of carbamoyl aspartate to dihydroorotate. This chain is Dihydroorotase, found in Pediococcus pentosaceus (strain ATCC 25745 / CCUG 21536 / LMG 10740 / 183-1w).